The chain runs to 363 residues: Carbamoyl phosphate synthase small chain (363 aa).

The segment at 1-172 (MTKRILMLED…AFASPGDGKR (172 aa)) is CPSase. 3 residues coordinate L-glutamine: Ser-46, Gly-220, and Gly-222. In terms of domain architecture, Glutamine amidotransferase type-1 spans 172–359 (RVVLVDYGVK…MEMMNGKEEG (188 aa)). Catalysis depends on Cys-247, which acts as the Nucleophile. Residues Leu-248, Gln-251, Asn-289, Gly-291, and Tyr-292 each coordinate L-glutamine. Active-site residues include His-332 and Glu-334.

It belongs to the CarA family. As to quaternary structure, composed of two chains; the small (or glutamine) chain promotes the hydrolysis of glutamine to ammonia, which is used by the large (or ammonia) chain to synthesize carbamoyl phosphate. Tetramer of heterodimers (alpha,beta)4.

The catalysed reaction is hydrogencarbonate + L-glutamine + 2 ATP + H2O = carbamoyl phosphate + L-glutamate + 2 ADP + phosphate + 2 H(+). It carries out the reaction L-glutamine + H2O = L-glutamate + NH4(+). It functions in the pathway amino-acid biosynthesis; L-arginine biosynthesis; carbamoyl phosphate from bicarbonate: step 1/1. Its pathway is pyrimidine metabolism; UMP biosynthesis via de novo pathway; (S)-dihydroorotate from bicarbonate: step 1/3. In terms of biological role, small subunit of the glutamine-dependent carbamoyl phosphate synthetase (CPSase). CPSase catalyzes the formation of carbamoyl phosphate from the ammonia moiety of glutamine, carbonate, and phosphate donated by ATP, constituting the first step of 2 biosynthetic pathways, one leading to arginine and/or urea and the other to pyrimidine nucleotides. The small subunit (glutamine amidotransferase) binds and cleaves glutamine to supply the large subunit with the substrate ammonia. The chain is Carbamoyl phosphate synthase small chain from Listeria monocytogenes serotype 4b (strain F2365).